The primary structure comprises 360 residues: NADH-quinone oxidoreductase subunit H (360 aa).

8 helical membrane passes run 20 to 40, 95 to 115, 130 to 150, 176 to 196, 206 to 226, 261 to 281, 297 to 317, and 336 to 356; these read GMVW…IPLM, GLFV…WVVI, LLLV…AGWA, FCLL…IVLA, GIGF…VYLI, IFFL…ALMF, IPGW…FIWI, and IFIP…LSPW.

Belongs to the complex I subunit 1 family. As to quaternary structure, NDH-1 is composed of 14 different subunits. Subunits NuoA, H, J, K, L, M, N constitute the membrane sector of the complex.

It is found in the cell inner membrane. It carries out the reaction a quinone + NADH + 5 H(+)(in) = a quinol + NAD(+) + 4 H(+)(out). Functionally, NDH-1 shuttles electrons from NADH, via FMN and iron-sulfur (Fe-S) centers, to quinones in the respiratory chain. The immediate electron acceptor for the enzyme in this species is believed to be ubiquinone. Couples the redox reaction to proton translocation (for every two electrons transferred, four hydrogen ions are translocated across the cytoplasmic membrane), and thus conserves the redox energy in a proton gradient. This subunit may bind ubiquinone. This chain is NADH-quinone oxidoreductase subunit H, found in Verminephrobacter eiseniae (strain EF01-2).